The following is a 160-amino-acid chain: uncharacterized protein (160 aa).

Phosphotyrosine is present on Y49.

In terms of biological role, may be involved in the assembly, structure, or function of the flagellum. May polymerize to form a filamentous structure that is part of the flagellum. This is an uncharacterized protein from Bacillus subtilis (strain 168).